The sequence spans 424 residues: Inositol phosphosphingolipids phospholipase C (424 aa).

Glutamate 49 serves as a coordination point for Mg(2+). Histidine 289 acts as the Proton acceptor in catalysis. 2 helical membrane passes run 335-357 (LRIA…IAWC) and 364-386 (VIIL…CIGL).

It belongs to the neutral sphingomyelinase family. The cofactor is Mg(2+).

It localises to the cell membrane. The protein localises to the endoplasmic reticulum membrane. It functions in the pathway lipid metabolism; sphingolipid metabolism. Inositol phosphosphingolipids phospholipase essential for the coordination of cell wall formation. Responsible for the hydrolysis of the phosphosphingolipids (IPS), inositol phosphorylceramide (IPC), mannosylinositol phosphorylceramide (MIPC), and mannosyldiinositol phosphorylceramide (M(IP)2C). The sequence is that of Inositol phosphosphingolipids phospholipase C (css1) from Schizosaccharomyces pombe (strain 972 / ATCC 24843) (Fission yeast).